Consider the following 345-residue polypeptide: MHVDDFSFDLPEALIAHHPPEQRRDSRLLCLDRDTGAVADRRFPDLVDLLRPEDLLVLNDTRVIPARLFGHKPTGGRVEVLVERPLDRHRVLARLRASKVPAPGTVLTLEGGVAAEVTGREGEFFTLRFTAEQTVLELLEHHGHMPLPPYIRRADVAADRERYQTVFARRPGAVAAPTAGLHFDNELLARIGARGVDTAWVTLHVGSGTFAPLRVSDPREHRMHSEWLDVPPATCAAIERARGRGGRVVAVGTTVVRALETAAQDGAVQPYQGETDIFIYPGHRFHAVDALVTNFHLPGSTLLMLVSAFAGRERVLAAYRHAVAQRYRFFSYGDAMFIAAGAADE.

This sequence belongs to the QueA family. Monomer.

The protein localises to the cytoplasm. The enzyme catalyses 7-aminomethyl-7-carbaguanosine(34) in tRNA + S-adenosyl-L-methionine = epoxyqueuosine(34) in tRNA + adenine + L-methionine + 2 H(+). Its pathway is tRNA modification; tRNA-queuosine biosynthesis. Transfers and isomerizes the ribose moiety from AdoMet to the 7-aminomethyl group of 7-deazaguanine (preQ1-tRNA) to give epoxyqueuosine (oQ-tRNA). The polypeptide is S-adenosylmethionine:tRNA ribosyltransferase-isomerase (Alkalilimnicola ehrlichii (strain ATCC BAA-1101 / DSM 17681 / MLHE-1)).